The following is a 31-amino-acid chain: Fibrinogen beta chain (31 aa).

A compositionally biased stretch (acidic residues) spans 1–10 (HYYDDTDEEE). A disordered region spans residues 1-31 (HYYDDTDEEERIVSTVDARGHRPLDKKREEA). The residue at position 2 (Y2) is a Sulfotyrosine; partial. Y3 is subject to Sulfotyrosine. Residues 18–31 (ARGHRPLDKKREEA) are compositionally biased toward basic and acidic residues.

As to quaternary structure, heterohexamer; disulfide linked. Contains 2 sets of 3 non-identical chains (alpha, beta and gamma). The 2 heterotrimers are in head to head conformation with the N-termini in a small central domain. Post-translationally, conversion of fibrinogen to fibrin is triggered by thrombin, which cleaves fibrinopeptides A and B from alpha and beta chains, and thus exposes the N-terminal polymerization sites responsible for the formation of the soft clot.

The protein resides in the secreted. In terms of biological role, cleaved by the protease thrombin to yield monomers which, together with fibrinogen alpha (FGA) and fibrinogen gamma (FGG), polymerize to form an insoluble fibrin matrix. Fibrin has a major function in hemostasis as one of the primary components of blood clots. In addition, functions during the early stages of wound repair to stabilize the lesion and guide cell migration during re-epithelialization. Was originally thought to be essential for platelet aggregation, based on in vitro studies using anticoagulated blood. However subsequent studies have shown that it is not absolutely required for thrombus formation in vivo. Enhances expression of SELP in activated platelets. Maternal fibrinogen is essential for successful pregnancy. Fibrin deposition is also associated with infection, where it protects against IFNG-mediated hemorrhage. May also facilitate the antibacterial immune response via both innate and T-cell mediated pathways. The chain is Fibrinogen beta chain (FGB) from Canis lupus familiaris (Dog).